Consider the following 858-residue polypeptide: Taste receptor type 1 member 3 (858 aa).

The first 20 residues, 1 to 20 (MPGLAILGLSLAAFLELGMG), serve as a signal peptide directing secretion. The Extracellular portion of the chain corresponds to 21–575 (SSLCLSQQFK…FLAWGEPAVL (555 aa)). 9 N-linked (GlcNAc...) asparagine glycosylation sites follow: N85, N130, N203, N264, N379, N387, N418, N439, and N482. A helical transmembrane segment spans residues 576 to 596 (SLLLLLCLVLGLTLAALGLFV). Over 597 to 610 (HYWDSPLVQASGGS) the chain is Cytoplasmic. A helical transmembrane segment spans residues 611 to 631 (LFCFGLICLGLFCLSVLLFPG). Residues 632–644 (RPRSASCLAQQPM) are Extracellular-facing. The helical transmembrane segment at 645-665 (AHLPLTGCLSTLFLQAAEIFV) threads the bilayer. Topologically, residues 666–687 (ESELPLSWANWLCSYLRGPWAW) are cytoplasmic. A helical membrane pass occupies residues 688-708 (LVVLLATLVEAALCAWYLMAF). The Extracellular portion of the chain corresponds to 709–735 (PPEVVTDWQVLPTEVLEHCRMRSWVSL). Residues 736–756 (GLVHITNAVLAFLCFLGTFLV) traverse the membrane as a helical segment. Residues 757–767 (QSQPGRYNRAR) are Cytoplasmic-facing. A helical membrane pass occupies residues 768-788 (GLTFAMLAYFIIWVSFVPLLA). Topologically, residues 789-796 (NVQVAYQP) are extracellular. The helical transmembrane segment at 797–817 (AVQMGAILFCALGILATFHLP) threads the bilayer. Residues 818-858 (KCYVLLWLPELNTQEFFLGRSPKEASDGNSGSSEATRGHSE) lie on the Cytoplasmic side of the membrane. The disordered stretch occupies residues 839–858 (PKEASDGNSGSSEATRGHSE).

The protein belongs to the G-protein coupled receptor 3 family. TAS1R subfamily. As to quaternary structure, forms homodimers or heterodimers with TAS1R1 and TAS1R2.

It is found in the cell membrane. Putative taste receptor. TAS1R1/TAS1R3 responds to the umami taste stimulus (the taste of monosodium glutamate) and also to most of the 20 standard L-amino acids, but not to their D-enantiomers or other compounds. TAS1R2/TAS1R3 recognizes diverse natural and synthetic sweeteners. TAS1R3 is essential for the recognition and response to the disaccharide trehalose. Sequence differences within and between species can significantly influence the selectivity and specificity of taste responses. The protein is Taste receptor type 1 member 3 (Tas1r3) of Rattus norvegicus (Rat).